The primary structure comprises 477 residues: Tyrosine-protein kinase transforming protein Fes (477 aa).

The interval Gly-49–Thr-76 is disordered. Over residues Gln-58–Gly-74 the composition is skewed to basic and acidic residues. An SH2 domain is found at Trp-115–Val-204. Residues Leu-216–Arg-477 form the Protein kinase domain. Residues Ile-222–Val-230 and Lys-245 contribute to the ATP site. Asp-338 (proton acceptor) is an active-site residue. Phosphotyrosine; by autocatalysis is present on Tyr-368.

It belongs to the protein kinase superfamily. Tyr protein kinase family. Fes/fps subfamily.

It carries out the reaction L-tyrosyl-[protein] + ATP = O-phospho-L-tyrosyl-[protein] + ADP + H(+). The chain is Tyrosine-protein kinase transforming protein Fes (V-FES) from Feline sarcoma virus (strain Snyder-Theilen).